The chain runs to 439 residues: Ornithine aminotransferase, mitochondrial (439 aa).

The N-terminal 35 residues, 1–35, are a transit peptide targeting the mitochondrion; it reads MLSKLASLQTVAALRRGLRTSVASATSVATKKTEQ. An N6-acetyllysine mark is found at Lys-49 and Lys-66. Residue Lys-102 is modified to N6-succinyllysine. Lys-107 is modified (N6-acetyllysine; alternate). The residue at position 107 (Lys-107) is an N6-succinyllysine; alternate. Lys-292 bears the N6-(pyridoxal phosphate)lysine mark. Lys-362 is subject to N6-acetyllysine; alternate. Lys-362 carries the N6-succinyllysine; alternate modification. Residues Lys-386 and Lys-392 each carry the N6-acetyllysine modification. Lys-405 bears the N6-acetyllysine; alternate mark. An N6-succinyllysine; alternate modification is found at Lys-405. Lys-421 bears the N6-acetyllysine mark.

Homohexamer. Pyridoxal 5'-phosphate is required as a cofactor. Expressed in the head and flagellum of epididymal sperm but not in testicular sperm (at protein level).

It is found in the mitochondrion matrix. The enzyme catalyses L-ornithine + 2-oxoglutarate = L-glutamate 5-semialdehyde + L-glutamate. Its pathway is amino-acid biosynthesis; L-proline biosynthesis; L-glutamate 5-semialdehyde from L-ornithine: step 1/1. In terms of biological role, catalyzes the reversible interconversion of L-ornithine and 2-oxoglutarate to L-glutamate semialdehyde and L-glutamate. The polypeptide is Ornithine aminotransferase, mitochondrial (Oat) (Rattus norvegicus (Rat)).